Here is a 150-residue protein sequence, read N- to C-terminus: uncharacterized protein (150 aa).

The N-terminal stretch at 1-21 is a signal peptide; the sequence is MAMEMAMMGLLGTVVGASAMG.

This is an uncharacterized protein from Mycobacterium tuberculosis (strain CDC 1551 / Oshkosh).